The chain runs to 165 residues: Copper-resistant cuproprotein CopI (165 aa).

The first 23 residues, 1 to 23 (MKNRILRPALLCVAALFATTAQA), serve as a signal peptide directing secretion. Residues 25–42 (AGHDHGSAHAGAHAHDAD) show a composition bias toward basic and acidic residues. Residues 25-50 (AGHDHGSAHAGAHAHDADTPYGRPGD) are disordered. Cu(2+) contacts are provided by His93, Cys148, His153, and Met158.

The protein belongs to the CopI family. In terms of assembly, monomer.

It is found in the periplasm. In terms of biological role, involved in copper tolerance. Required for copper resistance under both aerobic and anaerobic photosynthetic growth conditions. Binds copper. Could be an important defense against copper in the periplasm and may protect not only c type cytochromes but also other proteins with cysteine residues from copper ions that may catalyze nonnative disulfide bond formation. The chain is Copper-resistant cuproprotein CopI from Rubrivivax gelatinosus (Rhodocyclus gelatinosus).